The primary structure comprises 578 residues: Sulfite reductase [NADPH] hemoprotein beta-component (578 aa).

[4Fe-4S] cluster is bound by residues Cys441, Cys447, Cys487, and Cys491. Cys491 lines the siroheme pocket.

It belongs to the nitrite and sulfite reductase 4Fe-4S domain family. In terms of assembly, alpha(8)-beta(8). The alpha component is a flavoprotein, the beta component is a hemoprotein. Siroheme serves as cofactor. The cofactor is [4Fe-4S] cluster.

The enzyme catalyses hydrogen sulfide + 3 NADP(+) + 3 H2O = sulfite + 3 NADPH + 4 H(+). Its pathway is sulfur metabolism; hydrogen sulfide biosynthesis; hydrogen sulfide from sulfite (NADPH route): step 1/1. In terms of biological role, component of the sulfite reductase complex that catalyzes the 6-electron reduction of sulfite to sulfide. This is one of several activities required for the biosynthesis of L-cysteine from sulfate. This Vibrio vulnificus (strain CMCP6) protein is Sulfite reductase [NADPH] hemoprotein beta-component.